The following is a 295-amino-acid chain: Bifunctional protein FolD (295 aa).

NADP(+)-binding positions include 166–168 (GRS), Ser-191, and Ile-232.

Belongs to the tetrahydrofolate dehydrogenase/cyclohydrolase family. As to quaternary structure, homodimer.

The catalysed reaction is (6R)-5,10-methylene-5,6,7,8-tetrahydrofolate + NADP(+) = (6R)-5,10-methenyltetrahydrofolate + NADPH. The enzyme catalyses (6R)-5,10-methenyltetrahydrofolate + H2O = (6R)-10-formyltetrahydrofolate + H(+). The protein operates within one-carbon metabolism; tetrahydrofolate interconversion. In terms of biological role, catalyzes the oxidation of 5,10-methylenetetrahydrofolate to 5,10-methenyltetrahydrofolate and then the hydrolysis of 5,10-methenyltetrahydrofolate to 10-formyltetrahydrofolate. The protein is Bifunctional protein FolD of Rhodopseudomonas palustris (strain BisB5).